The sequence spans 293 residues: uncharacterized protein (293 aa).

Disordered stretches follow at residues 1–95 (MFLR…KDKA) and 268–293 (EETADWESEGQGKEAKEQTEGPGRAL). A phosphoserine mark is found at Ser-34, Ser-35, and Ser-89. 2 stretches are compositionally biased toward basic and acidic residues: residues 85-95 (KRMDSLKKDKA) and 277-286 (GQGKEAKEQT).

This is an uncharacterized protein from Rattus norvegicus (Rat).